A 110-amino-acid chain; its full sequence is Iron-sulfur cluster assembly protein CyaY (110 aa).

This sequence belongs to the frataxin family.

Its function is as follows. Involved in iron-sulfur (Fe-S) cluster assembly. May act as a regulator of Fe-S biogenesis. The sequence is that of Iron-sulfur cluster assembly protein CyaY from Pseudomonas fluorescens (strain ATCC BAA-477 / NRRL B-23932 / Pf-5).